A 258-amino-acid chain; its full sequence is Deoxyribose-phosphate aldolase (258 aa).

The active-site Proton donor/acceptor is the D102. Catalysis depends on K165, which acts as the Schiff-base intermediate with acetaldehyde. The Proton donor/acceptor role is filled by K199.

It belongs to the DeoC/FbaB aldolase family. DeoC type 2 subfamily.

Its subcellular location is the cytoplasm. It carries out the reaction 2-deoxy-D-ribose 5-phosphate = D-glyceraldehyde 3-phosphate + acetaldehyde. The protein operates within carbohydrate degradation; 2-deoxy-D-ribose 1-phosphate degradation; D-glyceraldehyde 3-phosphate and acetaldehyde from 2-deoxy-alpha-D-ribose 1-phosphate: step 2/2. Its function is as follows. Catalyzes a reversible aldol reaction between acetaldehyde and D-glyceraldehyde 3-phosphate to generate 2-deoxy-D-ribose 5-phosphate. The polypeptide is Deoxyribose-phosphate aldolase (Aliivibrio fischeri (strain ATCC 700601 / ES114) (Vibrio fischeri)).